The primary structure comprises 772 residues: Endoplasmic reticulum membrane sensor NFE2L1 (772 aa).

The helical; Signal-anchor for type II membrane protein transmembrane segment at 7–24 (YLTEGLLQFTILLSLIGV) threads the bilayer. The tract at residues 108-148 (DPEGSVSGSQPNSGLALESSSGLQDVTGPDNGVRESETEQG) is disordered. Polar residues predominate over residues 113 to 131 (VSGSQPNSGLALESSSGLQ). The interval 191 to 199 (VFDYSHRQK) is cholesterol recognition/amino acid consensus (CRAC) region. N-linked (GlcNAc...) asparagine glycosylation is present at N348. Positions 379–383 (SPEVE) are CPD. N412 and N423 each carry an N-linked (GlcNAc...) asparagine glycan. A disordered region spans residues 470-532 (EEEFDSDSGL…AVGYSSDSET (63 aa)). The Destruction motif motif lies at 476–480 (DSGLS). Residues 476-523 (DSGLSLDSSHSPSSLSSSEGSSSSSSSSSSSSSSASSSASSSFSEEGA) show a composition bias toward low complexity. The residue at position 528 (S528) is a Phosphoserine; by CK2. S599 is modified (phosphoserine; by PKA). The 64-residue stretch at 654 to 717 (LIRDIRRRGK…RQMKQKVQSL (64 aa)) folds into the bZIP domain. The tract at residues 656 to 675 (RDIRRRGKNKMAAQNCRKRK) is basic motif. The leucine-zipper stretch occupies residues 682–696 (LERDVEDLQRDKARL). The disordered stretch occupies residues 753 to 772 (RTMADQQARRQERKPKDRRK). The Nuclear localization signal signature appears at 761-768 (RRQERKPK). Residues 763–772 (QERKPKDRRK) are compositionally biased toward basic residues.

Belongs to the bZIP family. CNC subfamily. Interacts with KEAP1. As to quaternary structure, interacts (via CPD region) with FBXW7; leading to its ubiquitination and degradation. Interacts with SYVN1/HRD1; leading to its ubiquitination and degradation. Interacts (when ubiquitinated) with DDI2; leading to its cleavage. In terms of assembly, interacts (via the bZIP domain) with small MAF protein (MAFF, MAFG or MAFK); required for binding to antioxidant response elements (AREs) on DNA. Interacts (via Destruction motif) with BTRC; leading to its ubiquitination and degradation. Interacts with CEBPB; the heterodimer represses expression of DSPP during odontoblast differentiation. Interacts with MOTS-c, a peptide produced by the mitochondrially encoded 12S rRNA MT-RNR1. Post-translationally, cleaved at Leu-104 by the aspartyl protease DDI2 following retrotranslocation, releasing the protein from the endoplasmic reticulum membrane and forming the transcription factor NRF1 that translocates into the nucleus. Ubiquitination is prerequisite for cleavage by aspartyl protease DDI2. In terms of processing, N-glycosylated in normal conditions, when it has a single-pass type II membrane protein topology, with the DNA-binding domain facing the endoplasmic reticulum lumen. Deglycosylated during retrotranslocation to the cytosolic side of the membrane, to have a single-pass type III membrane protein topology with the major part of the protein facing the cytosol. Ubiquitinated by the SCF(FBXW7) complex and SYVN1/HRD1, leading to its degradation by the proteasome. Ubiquitinated during retrotranslocation to the cytosolic side of the membrane: ubiquitination does not lead to degradation and is required for processing by the aspartyl protease DDI2 and subsequent release from the endoplasmic reticulum membrane. Post-translationally, phosphorylation by CK2 at Ser-528 inhibits transcription factor activity, possibly by affecting DNA-binding activity. Phosphorylation at Ser-599 is required for interaction with CEBPB. In terms of processing, ubiquitinated by the SCF(BTRC) complex in the nucleus, leading to its degradation by the proteasome.

Its subcellular location is the endoplasmic reticulum membrane. It localises to the nucleus. Endoplasmic reticulum membrane sensor that translocates into the nucleus in response to various stresses to act as a transcription factor. Constitutes a precursor of the transcription factor NRF1. Able to detect various cellular stresses, such as cholesterol excess, oxidative stress or proteasome inhibition. In response to stress, it is released from the endoplasmic reticulum membrane following cleavage by the protease DDI2 and translocates into the nucleus to form the transcription factor NRF1. Acts as a key sensor of cholesterol excess: in excess cholesterol conditions, the endoplasmic reticulum membrane form of the protein directly binds cholesterol via its CRAC motif, preventing cleavage and release of the transcription factor NRF1, thereby allowing expression of genes promoting cholesterol removal, such as CD36. Involved in proteasome homeostasis: in response to proteasome inhibition, it is released from the endoplasmic reticulum membrane, translocates to the nucleus and activates expression of genes encoding proteasome subunits. Functionally, CNC-type bZIP family transcription factor that translocates to the nucleus and regulates expression of target genes in response to various stresses. Heterodimerizes with small-Maf proteins (MAFF, MAFG or MAFK) and binds DNA motifs including the antioxidant response elements (AREs), which regulate expression of genes involved in oxidative stress response. Activates or represses expression of target genes, depending on the context. Plays a key role in cholesterol homeostasis by acting as a sensor of cholesterol excess: in low cholesterol conditions, translocates into the nucleus and represses expression of genes involved in defense against cholesterol excess, such as CD36. In excess cholesterol conditions, the endoplasmic reticulum membrane form of the protein directly binds cholesterol via its CRAC motif, preventing cleavage and release of the transcription factor NRF1, thereby allowing expression of genes promoting cholesterol removal. Critical for redox balance in response to oxidative stress: acts by binding the AREs motifs on promoters and mediating activation of oxidative stress response genes, such as GCLC, GCLM, GSS, MT1 and MT2. Plays an essential role during fetal liver hematopoiesis: probably has a protective function against oxidative stress and is involved in lipid homeostasis in the liver. Involved in proteasome homeostasis: in response to proteasome inhibition, mediates the 'bounce-back' of proteasome subunits by translocating into the nucleus and activating expression of genes encoding proteasome subunits. Also involved in regulating glucose flux. Together with CEBPB; represses expression of DSPP during odontoblast differentiation. In response to ascorbic acid induction, activates expression of SP7/Osterix in osteoblasts. The protein is Endoplasmic reticulum membrane sensor NFE2L1 of Pongo abelii (Sumatran orangutan).